Reading from the N-terminus, the 156-residue chain is Transthyretin-like protein 1 (156 aa).

An N-terminal signal peptide occupies residues 1 to 17 (MKIALSFLFLTSTFSNA). N-linked (GlcNAc...) asparagine glycosylation occurs at Asn-151.

It belongs to the nematode transthyretin-like family.

Its subcellular location is the secreted. The chain is Transthyretin-like protein 1 (ttr-1) from Caenorhabditis elegans.